The following is a 292-amino-acid chain: 33 kDa chaperonin (292 aa).

Cystine bridges form between C230-C232 and C263-C266.

It belongs to the HSP33 family. In terms of processing, under oxidizing conditions two disulfide bonds are formed involving the reactive cysteines. Under reducing conditions zinc is bound to the reactive cysteines and the protein is inactive.

It is found in the cytoplasm. Redox regulated molecular chaperone. Protects both thermally unfolding and oxidatively damaged proteins from irreversible aggregation. Plays an important role in the bacterial defense system toward oxidative stress. In Salmonella typhi, this protein is 33 kDa chaperonin.